A 54-amino-acid chain; its full sequence is ATP synthase protein 8 (54 aa).

A helical membrane pass occupies residues 8 to 28 (WWLLNFFLGWTSLLVIFIILL).

The protein belongs to the ATPase protein 8 family. In terms of assembly, F-type ATPases have 2 components, CF(1) - the catalytic core - and CF(0) - the membrane proton channel.

It is found in the mitochondrion membrane. Mitochondrial membrane ATP synthase (F(1)F(0) ATP synthase or Complex V) produces ATP from ADP in the presence of a proton gradient across the membrane which is generated by electron transport complexes of the respiratory chain. F-type ATPases consist of two structural domains, F(1) - containing the extramembraneous catalytic core and F(0) - containing the membrane proton channel, linked together by a central stalk and a peripheral stalk. During catalysis, ATP synthesis in the catalytic domain of F(1) is coupled via a rotary mechanism of the central stalk subunits to proton translocation. Part of the complex F(0) domain. Minor subunit located with subunit a in the membrane. The protein is ATP synthase protein 8 (MT-ATP8) of Patiria pectinifera (Starfish).